Reading from the N-terminus, the 1209-residue chain is Sterol 3-beta-glucosyltransferase (1209 aa).

The GRAM 1 domain occupies 167–217 (ERLIKKFLPNDDEKYIEEYPCWLLRDIMIQGHAYLTNKHLFFFAFIPNFES). Residues 218 to 315 (DFNVTGSLRL…WVSSIKKQMF (98 aa)) form the PH domain. The GRAM 2 domain maps to 568–634 (VRFRQHFSFD…EDVENCYKET (67 aa)). Residues serine 745, arginine 746, aspartate 748, asparagine 1019, valine 1048, histidine 1050, histidine 1063, serine 1066, glycine 1067, threonine 1068, aspartate 1087, and glutamine 1088 each coordinate UDP-alpha-D-glucose. The disordered stretch occupies residues 1186-1209 (AKGNEKEEYSSEGSGSNDGSWLLI). Positions 1196 to 1209 (SEGSGSNDGSWLLI) are enriched in low complexity.

It belongs to the glycosyltransferase 28 family.

It localises to the cytoplasm. The protein localises to the membrane. It catalyses the reaction a sterol + UDP-alpha-D-glucose = a sterol 3-beta-D-glucoside + UDP + H(+). The catalysed reaction is ergosterol + UDP-alpha-D-glucose = ergosteryl 3-beta-D-glucoside + UDP + H(+). Sterol glycosyltransferase responsible for the glycosylation of ergosterol to form ergosterol-glucoside. The sequence is that of Sterol 3-beta-glucosyltransferase from Kluyveromyces lactis (strain ATCC 8585 / CBS 2359 / DSM 70799 / NBRC 1267 / NRRL Y-1140 / WM37) (Yeast).